The chain runs to 270 residues: MKRIALGVQYDGSVFCGWQSQPHGNTVQDELERALREFAQTPVQTIVAGRTDTGVHGLGQVVHFDTELDRADVSWVRGTNSFLPKTISVQWAKPMPDEFHARFSAFERTYYYVLYVHPVRSPMLAARAGWVHAALDVDAMQAAAAHLIGEHDFSAFRSSQCQSKTPVKHLYQIDVRQQGDFIHFRFRANAFLHHMVRNLMGCLVYIGRGRRPVEWMAEVLASRDREFAAPTFMPDGLYLAQVGYPEQFAVPAPQTGSVPWSTVWTEQAQT.

The active-site Nucleophile is D52. Y110 is a substrate binding site.

It belongs to the tRNA pseudouridine synthase TruA family. As to quaternary structure, homodimer.

It carries out the reaction uridine(38/39/40) in tRNA = pseudouridine(38/39/40) in tRNA. In terms of biological role, formation of pseudouridine at positions 38, 39 and 40 in the anticodon stem and loop of transfer RNAs. The chain is tRNA pseudouridine synthase A from Paraburkholderia xenovorans (strain LB400).